The chain runs to 201 residues: Small ribosomal subunit protein uS4c (201 aa).

Positions 89 to 150 (MRLDNIVFRL…RQKSQAIITK (62 aa)) constitute an S4 RNA-binding domain.

This sequence belongs to the universal ribosomal protein uS4 family. Part of the 30S ribosomal subunit. Contacts protein S5. The interaction surface between S4 and S5 is involved in control of translational fidelity.

The protein resides in the plastid. Its subcellular location is the chloroplast. One of the primary rRNA binding proteins, it binds directly to 16S rRNA where it nucleates assembly of the body of the 30S subunit. Its function is as follows. With S5 and S12 plays an important role in translational accuracy. This is Small ribosomal subunit protein uS4c (rps4) from Physcomitrium patens (Spreading-leaved earth moss).